A 259-amino-acid polypeptide reads, in one-letter code: Sesquipedalian-2 (259 aa).

The PH domain occupies 17 to 121 (PADHMGFLRT…WVKVLSRASF (105 aa)). A coiled-coil region spans residues 124–149 (MRLVVRELESQLQDARQSLALQRRSS). The F&amp;H motif lies at 223 to 235 (CFSTLHDWYGQEI).

Belongs to the sesquipedalian family. Forms homodimers and heterodimers with PHETA1. Interacts with OCRL and INPP5B.

Its subcellular location is the early endosome. It is found in the recycling endosome. The protein resides in the golgi apparatus. It localises to the trans-Golgi network. The protein localises to the cytoplasmic vesicle. Its subcellular location is the clathrin-coated vesicle. In terms of biological role, plays a role in endocytic trafficking. Required for receptor recycling from endosomes, both to the trans-Golgi network and the plasma membrane. This is Sesquipedalian-2 from Homo sapiens (Human).